We begin with the raw amino-acid sequence, 747 residues long: Tegument protein UL46 homolog (747 aa).

4 disordered regions span residues 437-484 (FCCP…SPRT), 525-593 (QRSD…DYMR), 611-665 (TPYM…PEVV), and 689-747 (SASR…VSSL). Residues 465–484 (LRSSRQLPTSPPSNIVSPRT) show a composition bias toward polar residues. The segment covering 528 to 540 (DSSSSDNSTCSST) has biased composition (low complexity). The segment covering 541-553 (ETQYITLPSTPSP) has biased composition (polar residues). Basic and acidic residues-rich tracts occupy residues 707-724 (VCRE…DGFI) and 736-747 (KHPDQTERVSSL).

Belongs to the herpesviridae HHV-1 VP11/12 protein family.

The protein resides in the virion tegument. Its subcellular location is the host cell membrane. In terms of biological role, modulates alpha trans-inducing factor-dependent activation of alpha genes. The protein is Tegument protein UL46 homolog of Equine herpesvirus 1 (strain Ab4p) (EHV-1).